A 193-amino-acid chain; its full sequence is Ion-translocating oxidoreductase complex subunit A (193 aa).

Transmembrane regions (helical) follow at residues 5 to 25, 39 to 59, 62 to 82, 102 to 122, 134 to 154, and 170 to 190; these read LMLL…FLGL, IGMG…TWLI, FLLV…LVIA, VLGI…VALL, VLYG…FAGL, and APIS…FAGL.

The protein belongs to the NqrDE/RnfAE family. The complex is composed of six subunits: RnfA, RnfB, RnfC, RnfD, RnfE and RnfG.

Its subcellular location is the cell inner membrane. Functionally, part of a membrane-bound complex that couples electron transfer with translocation of ions across the membrane. The chain is Ion-translocating oxidoreductase complex subunit A from Azoarcus sp. (strain BH72).